We begin with the raw amino-acid sequence, 142 residues long: Large ribosomal subunit protein uL11 (142 aa).

Belongs to the universal ribosomal protein uL11 family. As to quaternary structure, part of the ribosomal stalk of the 50S ribosomal subunit. Interacts with L10 and the large rRNA to form the base of the stalk. L10 forms an elongated spine to which L12 dimers bind in a sequential fashion forming a multimeric L10(L12)X complex. One or more lysine residues are methylated.

In terms of biological role, forms part of the ribosomal stalk which helps the ribosome interact with GTP-bound translation factors. The polypeptide is Large ribosomal subunit protein uL11 (Serratia marcescens).